We begin with the raw amino-acid sequence, 347 residues long: NADH-ubiquinone oxidoreductase chain 2 (347 aa).

10 helical membrane-spanning segments follow: residues 3–23 (PLALSLILTTLLAGTLITMMS), 25–45 (HWLTAWMGLEMNMLTMIPILM), 59–79 (YFMTQATASMMLMMALTINLM), 93–115 (VASNVALMALMTKLGSAPFHFWV), 150–170 (NTNLIYLSGLLSILIGGWGGL), 178–198 (ILAYSSISHMGWMLIILPFNP), 200–220 (LTLLNLAIYILLTLSIFMILA), 240–260 (MTIMLMTTLLSLGGLPPLSGF), 274–294 (NSIIMPLTMAIMTLLNMYFYM), and 326–346 (LPTLITLSNMLLPLTPMISML).

Belongs to the complex I subunit 2 family. Core subunit of respiratory chain NADH dehydrogenase (Complex I) which is composed of 45 different subunits. Interacts with TMEM242.

The protein localises to the mitochondrion inner membrane. The catalysed reaction is a ubiquinone + NADH + 5 H(+)(in) = a ubiquinol + NAD(+) + 4 H(+)(out). Its function is as follows. Core subunit of the mitochondrial membrane respiratory chain NADH dehydrogenase (Complex I) which catalyzes electron transfer from NADH through the respiratory chain, using ubiquinone as an electron acceptor. Essential for the catalytic activity and assembly of complex I. The polypeptide is NADH-ubiquinone oxidoreductase chain 2 (Mammuthus primigenius (Siberian woolly mammoth)).